The chain runs to 514 residues: L-threonine dehydratase biosynthetic IlvA (514 aa).

Lys-62 is modified (N6-(pyridoxal phosphate)lysine). Residues Asn-89, 188–192 (GGGGL), and Ser-315 contribute to the pyridoxal 5'-phosphate site. ACT-like domains lie at 339–411 (ALLA…DLSD) and 434–504 (RLYS…DETN).

Belongs to the serine/threonine dehydratase family. In terms of assembly, homotetramer. The cofactor is pyridoxal 5'-phosphate.

It catalyses the reaction L-threonine = 2-oxobutanoate + NH4(+). The protein operates within amino-acid biosynthesis; L-isoleucine biosynthesis; 2-oxobutanoate from L-threonine: step 1/1. Isoleucine allosterically inhibits whereas valine allosterically activates this enzyme. Its function is as follows. Catalyzes the anaerobic formation of alpha-ketobutyrate and ammonia from threonine in a two-step reaction. The first step involved a dehydration of threonine and a production of enamine intermediates (aminocrotonate), which tautomerizes to its imine form (iminobutyrate). Both intermediates are unstable and short-lived. The second step is the nonenzymatic hydrolysis of the enamine/imine intermediates to form 2-ketobutyrate and free ammonia. In the low water environment of the cell, the second step is accelerated by RidA. This Escherichia coli (strain K12) protein is L-threonine dehydratase biosynthetic IlvA (ilvA).